The following is a 74-amino-acid chain: NADH dehydrogenase [ubiquinone] 1 alpha subcomplex assembly factor 8 (74 aa).

Positions 22-69 (LAACGAEASAYGKCVQASTAPGGRLSKDLCVREFEALRSCFAAAAKKT) constitute a CHCH domain. Short sequence motifs (cx9C motif) lie at residues 25–35 (CGAEASAYGKC) and 51–61 (CVREFEALRSC). 2 disulfide bridges follow: Cys-25–Cys-61 and Cys-35–Cys-51.

Interacts with NDUFAF5.

It localises to the mitochondrion. Involved in the assembly of mitochondrial NADH:ubiquinone oxidoreductase complex (complex I, MT-ND1). Required to stabilize NDUFAF5. The chain is NADH dehydrogenase [ubiquinone] 1 alpha subcomplex assembly factor 8 from Mus musculus (Mouse).